The sequence spans 153 residues: Large ribosomal subunit protein uL22 (153 aa).

Residues 110–153 (ITVIVESRPPKQKGASAASARSRRAQGSKAAATKKSAETKEGSE) form a disordered region. Basic and acidic residues predominate over residues 144 to 153 (KSAETKEGSE).

The protein belongs to the universal ribosomal protein uL22 family. As to quaternary structure, part of the 50S ribosomal subunit.

Functionally, this protein binds specifically to 23S rRNA; its binding is stimulated by other ribosomal proteins, e.g. L4, L17, and L20. It is important during the early stages of 50S assembly. It makes multiple contacts with different domains of the 23S rRNA in the assembled 50S subunit and ribosome. Its function is as follows. The globular domain of the protein is located near the polypeptide exit tunnel on the outside of the subunit, while an extended beta-hairpin is found that lines the wall of the exit tunnel in the center of the 70S ribosome. The protein is Large ribosomal subunit protein uL22 of Mycolicibacterium smegmatis (strain ATCC 700084 / mc(2)155) (Mycobacterium smegmatis).